A 184-amino-acid polypeptide reads, in one-letter code: Peptide deformylase (184 aa).

The Fe cation site is built by Cys111 and His154. Residue Glu155 is part of the active site. His158 is a Fe cation binding site.

This sequence belongs to the polypeptide deformylase family. The cofactor is Fe(2+).

It catalyses the reaction N-terminal N-formyl-L-methionyl-[peptide] + H2O = N-terminal L-methionyl-[peptide] + formate. In terms of biological role, removes the formyl group from the N-terminal Met of newly synthesized proteins. Requires at least a dipeptide for an efficient rate of reaction. N-terminal L-methionine is a prerequisite for activity but the enzyme has broad specificity at other positions. The sequence is that of Peptide deformylase from Pediococcus pentosaceus (strain ATCC 25745 / CCUG 21536 / LMG 10740 / 183-1w).